The chain runs to 468 residues: SVGFKAGVKEYKLTYYTPEYETKDTDILAAFRVTPQPGVPPEEAGXAVAAESSTGTWTTVWTDGLTSLDRYKGRCYHIEPVPGEKDQYXXYVAYPLDLFEEGSVTNMFTSIVGNVFGFKALRALRLEDLRIPTAYIKTFQGPPHGIQVERDKLNKYGRPLLGCTIKPKLGLSAKNYGRAVYECLRGGLDFTKDDENVNSQPFMRWRDRFLFCAEAIYKSQAETGEIKGHYLNATAGTCEEMMKRAVFARELGVPIVMHDYLTGGFTANTSLAHYCRDNGLLLHIHRAMHAVIDRQKNHGMTFRVLRKALRLSGGDHIHAGTVVGKLEGERDITLGFVDLLRDDFVEKDRSRGIYFTQDWVSLPGVIPVASGGIHVWHMPALTEIFGDDSVLQFGGGTLGHPWGNAPGAVANRVALEACVLARNEGRDLAAEGNAIIREACKWSPELAAACEVWKEIKFEFKAVDTLDK.

At Lys-5 the chain carries N6,N6,N6-trimethyllysine. 2 residues coordinate substrate: Asn-114 and Thr-164. The active-site Proton acceptor is Lys-166. Residue Lys-168 coordinates substrate. Residues Lys-192, Asp-194, and Glu-195 each coordinate Mg(2+). N6-carboxylysine is present on Lys-192. His-285 (proton acceptor) is an active-site residue. 3 residues coordinate substrate: Arg-286, His-318, and Ser-370.

Belongs to the RuBisCO large chain family. Type I subfamily. In terms of assembly, heterohexadecamer of 8 large chains and 8 small chains; disulfide-linked. The disulfide link is formed within the large subunit homodimers. Requires Mg(2+) as cofactor. The disulfide bond which can form in the large chain dimeric partners within the hexadecamer appears to be associated with oxidative stress and protein turnover.

Its subcellular location is the plastid. It is found in the chloroplast. It catalyses the reaction 2 (2R)-3-phosphoglycerate + 2 H(+) = D-ribulose 1,5-bisphosphate + CO2 + H2O. The catalysed reaction is D-ribulose 1,5-bisphosphate + O2 = 2-phosphoglycolate + (2R)-3-phosphoglycerate + 2 H(+). In terms of biological role, ruBisCO catalyzes two reactions: the carboxylation of D-ribulose 1,5-bisphosphate, the primary event in carbon dioxide fixation, as well as the oxidative fragmentation of the pentose substrate in the photorespiration process. Both reactions occur simultaneously and in competition at the same active site. The polypeptide is Ribulose bisphosphate carboxylase large chain (Salvia divinorum (Maria pastora)).